The following is an 822-amino-acid chain: Tubulin polyglutamylase TTLL6 (822 aa).

The disordered stretch occupies residues 1–24 (MLQCLTSESEEGAEEREESSTEDL). Residues 8–24 (ESEEGAEEREESSTEDL) are compositionally biased toward acidic residues. The TTL domain occupies 57-400 (KKRLVINLSN…GNCDKKKVLE (344 aa)). Residues Lys-174, 180 to 181 (QG), 202 to 205 (QLYI), and 215 to 217 (KFD) contribute to the ATP site. Residue Gln-180 participates in a protein binding. Residue Arg-241 coordinates L-glutamate. 263–264 (TN) contacts ATP. L-glutamate contacts are provided by Tyr-265, Ser-266, and Lys-283. Residues Asp-346, Glu-359, and Asn-361 each contribute to the Mg(2+) site. Residue His-362 coordinates a protein. The interval 371 to 450 (KLDKEVKDSL…CGGFRLIYPG (80 aa)) is c-MTBD region. Lys-377 is an L-glutamate binding site. 2 disordered regions span residues 736-772 (PLFPAPKSQYPTLSKERCPHSRSSSRKKEMNSPSVFV) and 791-822 (TQARLDPRPSRSHSGTTTRDSSTQDPKHTATA). Residues 802 to 814 (SHSGTTTRDSSTQ) are compositionally biased toward polar residues.

Belongs to the tubulin--tyrosine ligase family. In terms of assembly, found in a complex with CEP41. Requires Mg(2+) as cofactor. As to expression, highly expressed in testis. Expressed in brain, heart, kidney, liver, lung, muscle and trachea. In the brain, specifically expressed in ependymal cilia.

The protein resides in the cytoplasm. It is found in the cytoskeleton. Its subcellular location is the cilium axoneme. The protein localises to the cilium basal body. It catalyses the reaction L-glutamyl-[protein] + L-glutamate + ATP = gamma-L-glutamyl-L-glutamyl-[protein] + ADP + phosphate + H(+). It carries out the reaction (L-glutamyl)(n)-gamma-L-glutamyl-L-glutamyl-[protein] + L-glutamate + ATP = (L-glutamyl)(n+1)-gamma-L-glutamyl-L-glutamyl-[protein] + ADP + phosphate + H(+). Its function is as follows. Polyglutamylase which modifies both tubulin and non-tubulin proteins, generating alpha-linked polyglutamate side chains on the gamma-carboxyl group of specific glutamate residues of target proteins. Preferentially mediates ATP-dependent long polyglutamate chain elongation over the initiation step of the polyglutamylation reaction. Preferentially modifies the alpha-tubulin tail over a beta-tail. Promotes tubulin polyglutamylation which stimulates spastin/SPAST-mediated microtubule severing, thereby regulating microtubule functions. Mediates microtubule polyglutamylation in primary cilia axoneme which is important for ciliary structural formation and motility. Mediates microtubule polyglutamylation in motile cilia, necessary for the regulation of ciliary coordinated beating. Polyglutamylates non-tubulin protein nucleotidyltransferase CGAS, leading to CGAS DNA-binding inhibition, thereby preventing antiviral defense response. In Mus musculus (Mouse), this protein is Tubulin polyglutamylase TTLL6.